A 1855-amino-acid polypeptide reads, in one-letter code: Unconventional myosin-Va (1855 aa).

An N-acetylalanine modification is found at alanine 2. Residues 8–60 enclose the Myosin N-terminal SH3-like domain; sequence TKFARVWIPDPEEVWKSAELLKDYKPGDKVLLLHLEEGKDLEYHLDPKTKELP. A Myosin motor domain is found at 69–763; it reads VGENDLTALS…QVAYLEKLRA (695 aa). 163–170 provides a ligand contact to ATP; sequence GESGAGKT. Residues 598–631 form a disordered region; that stretch reads AISPTSATSSGRTPLTRTPAKPTKGRPGQMAKEH. Residue serine 600 is modified to Phosphoserine. The segment covering 600-613 has biased composition (polar residues); the sequence is SPTSATSSGRTPLT. Residues 643 to 665 are actin-binding; sequence LHLLMETLNATTPHYVRCIKPND. IQ domains lie at 766–788, 789–818, 814–836, 837–861, 862–883, and 885–914; these read LRAA…KYLR, MRKA…TKAA, RTKA…RYKI, RRAA…RKIL, REHK…THYK, and SMHA…EARS. 2 coiled-coil regions span residues 914–1237 and 1338–1445; these read SVER…APEV and VYEG…ELEV. The residue at position 1032 (threonine 1032) is a Phosphothreonine. Residues serine 1452 and serine 1652 each carry the phosphoserine modification. Positions 1534–1810 constitute a Dilute domain; the sequence is TSTINSIKKV…IRTIQMRLRD (277 aa). Threonine 1760 bears the Phosphothreonine mark.

This sequence belongs to the TRAFAC class myosin-kinesin ATPase superfamily. Myosin family. May be a homodimer, which associates with multiple calmodulin or myosin light chains. Interacts with RIPL2, the interaction is required for its role in dendrite formation. Interacts with MLPH. Interacts with SYTL4. Interacts with MYRIP. Interacts with RAB10; mediates the transport to the plasma membrane of SLC2A4/GLUT4 storage vesicles. Interacts with FMR1; this interaction occurs in association with polyribosome. Detected in melanocytes.

The catalysed reaction is ATP + H2O = ADP + phosphate + H(+). Functionally, processive actin-based motor that can move in large steps approximating the 36-nm pseudo-repeat of the actin filament. Can hydrolyze ATP in the presence of actin, which is essential for its function as a motor protein. Involved in melanosome transport. Also mediates the transport of vesicles to the plasma membrane. May also be required for some polarization process involved in dendrite formation. This Homo sapiens (Human) protein is Unconventional myosin-Va (MYO5A).